A 289-amino-acid polypeptide reads, in one-letter code: Thiazole synthase (289 aa).

Lysine 132 (schiff-base intermediate with DXP) is an active-site residue. 1-deoxy-D-xylulose 5-phosphate contacts are provided by residues glycine 193, 219 to 220, and 241 to 242; these read AG and NT.

It belongs to the ThiG family. In terms of assembly, homotetramer. Forms heterodimers with either ThiH or ThiS.

Its subcellular location is the cytoplasm. The catalysed reaction is [ThiS sulfur-carrier protein]-C-terminal-Gly-aminoethanethioate + 2-iminoacetate + 1-deoxy-D-xylulose 5-phosphate = [ThiS sulfur-carrier protein]-C-terminal Gly-Gly + 2-[(2R,5Z)-2-carboxy-4-methylthiazol-5(2H)-ylidene]ethyl phosphate + 2 H2O + H(+). It participates in cofactor biosynthesis; thiamine diphosphate biosynthesis. Functionally, catalyzes the rearrangement of 1-deoxy-D-xylulose 5-phosphate (DXP) to produce the thiazole phosphate moiety of thiamine. Sulfur is provided by the thiocarboxylate moiety of the carrier protein ThiS. In vitro, sulfur can be provided by H(2)S. This is Thiazole synthase from Rhodospirillum rubrum (strain ATCC 11170 / ATH 1.1.1 / DSM 467 / LMG 4362 / NCIMB 8255 / S1).